Consider the following 294-residue polypeptide: Nucleotide-binding protein CPF_0343 (294 aa).

8–15 contributes to the ATP binding site; it reads GLSGAGKT. Residue 59–62 coordinates GTP; that stretch reads DIRG.

Belongs to the RapZ-like family.

Its function is as follows. Displays ATPase and GTPase activities. The sequence is that of Nucleotide-binding protein CPF_0343 from Clostridium perfringens (strain ATCC 13124 / DSM 756 / JCM 1290 / NCIMB 6125 / NCTC 8237 / Type A).